We begin with the raw amino-acid sequence, 48 residues long: uncharacterized protein (48 aa).

This is an uncharacterized protein from Acidianus hospitalis (AFV-1).